Reading from the N-terminus, the 276-residue chain is Potassium/proton antiporter CemA (276 aa).

The next 3 helical transmembrane spans lie at 59–79 (LLLL…WIFG), 199–219 (FFII…GWEV), and 236–256 (FIFL…KYWI).

Belongs to the CemA family.

The protein localises to the plastid. The protein resides in the chloroplast inner membrane. It carries out the reaction K(+)(in) + H(+)(out) = K(+)(out) + H(+)(in). In terms of biological role, contributes to K(+)/H(+) antiport activity by supporting proton efflux to control proton extrusion and homeostasis in chloroplasts in a light-dependent manner to modulate photosynthesis. Prevents excessive induction of non-photochemical quenching (NPQ) under continuous-light conditions. Indirectly promotes efficient inorganic carbon uptake into chloroplasts. The sequence is that of Potassium/proton antiporter CemA from Cyanidioschyzon merolae (strain NIES-3377 / 10D) (Unicellular red alga).